The chain runs to 231 residues: MSGEENPASKPTPVQDVQGDGRWMSLHHRFVADSKDKEPEVVFIGDSLVQLMHQCEIWRELFSPLHALNFGIGGDGTQHVLWRLENGELEHIRPKIVVVWVGTNNHGHTAEQVTGGIKAIVQLVNERQPQARVVVLDLLPRGQHPNPLREKNQRVNELVRAALAGHPRAHFLDADPGFVHSDGTISHHDMYDYLHLSRLGYAPVCRALHSLLLRLLAQDQGQGAPLLDPAP.

Serine 2 is subject to N-acetylserine. Serine 2 bears the Phosphoserine mark. Catalysis depends on residues serine 47, aspartate 192, and histidine 195.

Belongs to the 'GDSL' lipolytic enzyme family. Platelet-activating factor acetylhydrolase IB beta/gamma subunits subfamily. Forms a catalytic dimer which is either homodimer (alpha1/alpha1 homodimer) or heterodimer with PAFAH1B2 (alpha1/alpha2 heterodimer). Component of the cytosolic (PAF-AH (I)) heterotetrameric enzyme, which is composed of PAFAH1B1 (beta), PAFAH1B2 (alpha2) and PAFAH1B3 (alpha1) subunits. The catalytic activity of the enzyme resides in the alpha1 (PAFAH1B3) and alpha2 (PAFAH1B2) subunits, whereas the beta subunit (PAFAH1B1) has regulatory activity. Trimer formation is not essential for the catalytic activity. Interacts with VLDLR; this interaction may modulate the Reelin pathway.

The protein localises to the cytoplasm. The enzyme catalyses a 1-O-alkyl-2-acetyl-sn-glycero-3-phosphocholine + H2O = a 1-O-alkyl-sn-glycero-3-phosphocholine + acetate + H(+). The catalysed reaction is 1-O-hexadecyl-2-acetyl-sn-glycero-3-phosphocholine + H2O = 1-O-hexadecyl-sn-glycero-3-phosphocholine + acetate + H(+). It carries out the reaction 1-O-hexadecyl-2-acetyl-sn-glycero-3-phosphate + H2O = 1-O-hexadecyl-sn-glycero-3-phosphate + acetate + H(+). Its activity is regulated as follows. Beta subunit (PAFAH1B1) inhibits the acetylhydrolase activity of the alpha1/alpha1 catalytic homodimer. Alpha1 catalytic subunit of the cytosolic type I platelet-activating factor (PAF) acetylhydrolase (PAF-AH (I)) heterotetrameric enzyme that catalyzes the hydrolyze of the acetyl group at the sn-2 position of PAF and its analogs and modulates the action of PAF. The activity and substrate specificity of PAF-AH (I) are affected by its subunit composition. Both alpha1/alpha1 homodimer (PAFAH1B3/PAFAH1B3 homodimer) and alpha1/alpha2 heterodimer(PAFAH1B3/PAFAH1B2 heterodimer) hydrolyze 1-O-alkyl-2-acetyl-sn-glycero-3-phosphoric acid (AAGPA) more efficiently than PAF, but they have little hydrolytic activity towards 1-O-alkyl-2-acetyl-sn-glycero-3-phosphorylethanolamine (AAGPE). Plays an important role during the development of brain. In Pongo abelii (Sumatran orangutan), this protein is Platelet-activating factor acetylhydrolase IB subunit alpha1.